The following is an 874-amino-acid chain: Speckle targeted PIP5K1A-regulated poly(A) polymerase (874 aa).

The Matrin-type zinc-finger motif lies at 16–46 (FRCCLCHVTTANRPSLDAHLGGRKHRHLVEL). The 73-residue stretch at 56–128 (RSVFVSGFPR…HRLRVRPREQ (73 aa)) folds into the RRM domain. A disordered region spans residues 113 to 146 (QHSLGGHRLRVRPREQKEFQSPASKSPKGAAPDS). An ATP-binding site is contributed by Ser205. Mg(2+)-binding residues include Asp216 and Asp218. UTP-binding residues include Asp216 and Asp218. The disordered stretch occupies residues 252 to 334 (QALACTPASP…ELAETPKEEK (83 aa)). The span at 259-269 (ASPPDSQPPAS) shows a compositional bias: pro residues. The span at 280 to 291 (TPSSSLAPQTPD) shows a compositional bias: polar residues. Asn392 is an ATP binding site. Positions 392, 414, 432, and 549 each coordinate UTP. In terms of domain architecture, PAP-associated spans 491 to 549 (LSSLLAQFFSCVSCWDLRGSLLSLREGQALPVAGGLPSNLWEGLRLGPLNLQDPFDLSH). Residues 598 to 874 (SSPSSLLSAT…FLPQAIRHLK (277 aa)) form a KA1; binds the bulging loops of U6 snRNA but is dispensable for terminal uridylyltransferase activity region. Disordered regions lie at residues 638-662 (ATKR…KRLK) and 705-761 (MQSP…ASLP). Ser750 carries the phosphoserine modification.

Belongs to the DNA polymerase type-B-like family. As to quaternary structure, associates with the cleavage and polyadenylation specificity factor (CPSF) complex. Interacts with CPSF1 and CPSF3; the interaction is direct. Interacts with PIP5K1A. The cofactor is Mg(2+). Mn(2+) serves as cofactor. Phosphorylated by CK1 in the proline-rich (Pro-rich) region. In terms of tissue distribution, widely expressed.

It is found in the nucleus. The protein localises to the nucleolus. The protein resides in the nucleus speckle. It catalyses the reaction RNA(n) + UTP = RNA(n)-3'-uridine ribonucleotide + diphosphate. It carries out the reaction RNA(n) + ATP = RNA(n)-3'-adenine ribonucleotide + diphosphate. Adenylyltransferase activity is specifically phosphatidylinositol 4,5-bisphosphate (PtdIns(4,5)P2). Poly(A) polymerase that creates the 3'-poly(A) tail of specific pre-mRNAs. Localizes to nuclear speckles together with PIP5K1A and mediates polyadenylation of a select set of mRNAs, such as HMOX1. In addition to polyadenylation, it is also required for the 3'-end cleavage of pre-mRNAs: binds to the 3'UTR of targeted pre-mRNAs and promotes the recruitment and assembly of the CPSF complex on the 3'UTR of pre-mRNAs. In addition to adenylyltransferase activity, also has uridylyltransferase activity. However, the ATP ratio is higher than UTP in cells, suggesting that it functions primarily as a poly(A) polymerase. Acts as a specific terminal uridylyltransferase for U6 snRNA in vitro: responsible for a controlled elongation reaction that results in the restoration of the four 3'-terminal UMP-residues found in newly transcribed U6 snRNA. Not involved in replication-dependent histone mRNA degradation. This Homo sapiens (Human) protein is Speckle targeted PIP5K1A-regulated poly(A) polymerase (TUT1).